Consider the following 256-residue polypeptide: tRNA pseudouridine synthase A 1 (256 aa).

Asp-53 (nucleophile) is an active-site residue. Tyr-111 lines the substrate pocket.

The protein belongs to the tRNA pseudouridine synthase TruA family. Homodimer.

It carries out the reaction uridine(38/39/40) in tRNA = pseudouridine(38/39/40) in tRNA. Formation of pseudouridine at positions 38, 39 and 40 in the anticodon stem and loop of transfer RNAs. This is tRNA pseudouridine synthase A 1 from Protochlamydia amoebophila (strain UWE25).